The chain runs to 690 residues: Crooked neck-like protein 1 (690 aa).

HAT repeat units lie at residues 61-93 (DYKL…WEES), 95-127 (KEIQ…MEMK), 129-161 (RQVN…MEEM), 163-194 (GNVA…FELR), 196-227 (KEVE…FEEK), 229-264 (AYFA…FEEN), 266-300 (KEFE…FEKK), 310-342 (IIVS…LVES), 344-378 (AEAD…LWVN), 388-424 (KDPE…FEIR), 459-491 (REFD…LETI), 493-527 (GDIE…FEIE), 529-560 (EETE…FELS), 565-606 (GSVA…EFGT), 608-646 (SDKE…YIFP), and 648-673 (DAAN…EREA). Positions 250 to 467 (MDEHLYVAFA…LREFDRCRKL (218 aa)) are mediates interaction with HSP90. Ser342 is modified (phosphoserine). A Nuclear localization signal motif is present at residues 618–626 (PEKVKKRRK). Residues 667–679 (QQQEREAAEQDPD) are compositionally biased toward basic and acidic residues. The interval 667 to 690 (QQQEREAAEQDPDKDIDESESSSF) is disordered. Acidic residues predominate over residues 680–690 (KDIDESESSSF). Ser689 is subject to Phosphoserine.

Belongs to the crooked-neck family. As to quaternary structure, identified in the spliceosome C complex. Present in a spliceosome complex assembled in vitro containing CRNKL1, HPRP8BP and SNRPB2. Component of the minor spliceosome, which splices U12-type introns. Interacts with PPIL2 (via the PPIase cyclophilin-type domain); they may form a trimeric complex with HSP90.

It is found in the nucleus. It localises to the nucleus speckle. In terms of biological role, involved in pre-mRNA splicing process. As a component of the minor spliceosome, involved in the splicing of U12-type introns in pre-mRNAs. The polypeptide is Crooked neck-like protein 1 (Crnkl1) (Mus musculus (Mouse)).